An 865-amino-acid polypeptide reads, in one-letter code: Catenin alpha-2 (865 aa).

Residues 823-839 (PEKKPLVKREKPEECQT) show a composition bias toward basic and acidic residues. The interval 823–851 (PEKKPLVKREKPEECQTRVRRGSQKKHIS) is disordered. Residues 840 to 850 (RVRRGSQKKHI) show a composition bias toward basic residues.

This sequence belongs to the vinculin/alpha-catenin family.

It is found in the cell membrane. The protein resides in the cytoplasm. It localises to the cytoskeleton. The protein localises to the cell junction. Its subcellular location is the adherens junction. It is found in the cell projection. The protein resides in the axon. It localises to the nucleus. In terms of biological role, may function as a linker between cadherin adhesion receptors and the cytoskeleton to regulate cell-cell adhesion and differentiation in the nervous system. This Danio rerio (Zebrafish) protein is Catenin alpha-2 (Ctnna2).